Consider the following 47-residue polypeptide: Large ribosomal subunit protein bL36A (47 aa).

Belongs to the bacterial ribosomal protein bL36 family.

The protein is Large ribosomal subunit protein bL36A of Yersinia enterocolitica serotype O:8 / biotype 1B (strain NCTC 13174 / 8081).